The following is a 223-amino-acid chain: UPF0502 protein Avin_04790 (223 aa).

This sequence belongs to the UPF0502 family.

This chain is UPF0502 protein Avin_04790, found in Azotobacter vinelandii (strain DJ / ATCC BAA-1303).